A 1114-amino-acid polypeptide reads, in one-letter code: Lysylphosphatidylglycerol biosynthesis bifunctional protein LysX (1114 aa).

Over residues 1-11 (MSASTETHHAS) the composition is skewed to basic and acidic residues. The tract at residues 1–28 (MSASTETHHASEAAVPTAPRPRPALGSK) is disordered. The phosphatidylglycerol lysyltransferase stretch occupies residues 1–618 (MSASTETHHA…GLHSDGSAPG (618 aa)). The next 6 membrane-spanning stretches (helical) occupy residues 38–58 (IAGL…ISPV), 77–97 (APDT…ALAS), 101–121 (IAWW…VIVS), 126–146 (NVNA…LVAA), 164–184 (GVLI…VELF), and 219–239 (FVNT…VITL). The lysine--tRNA ligase stretch occupies residues 619-1114 (EGLAPTATGP…LAFPLAKPRQ (496 aa)). A DNA-binding region (OB) is located at residues 674 to 751 (VRIAGRLLRI…LSLLANEWRM (78 aa)). Mg(2+) is bound by residues D1025 and E1032.

The protein in the N-terminal section; belongs to the LPG synthetase family. In the C-terminal section; belongs to the class-II aminoacyl-tRNA synthetase family. Mg(2+) is required as a cofactor.

Its subcellular location is the cell membrane. The catalysed reaction is tRNA(Lys) + L-lysine + ATP = L-lysyl-tRNA(Lys) + AMP + diphosphate. It carries out the reaction L-lysyl-tRNA(Lys) + a 1,2-diacyl-sn-glycero-3-phospho-(1'-sn-glycerol) = a 1,2-diacyl-sn-glycero-3-phospho-1'-(3'-O-L-lysyl)-sn-glycerol + tRNA(Lys). Functionally, catalyzes the production of L-lysyl-tRNA(Lys)transfer and the transfer of a lysyl group from L-lysyl-tRNA(Lys) to membrane-bound phosphatidylglycerol (PG), which produces lysylphosphatidylglycerol (LPG), one of the components of the bacterial membrane with a positive net charge. LPG synthesis contributes to the resistance to cationic antimicrobial peptides (CAMPs) and likely protects M.tuberculosis against the CAMPs produced by competiting microorganisms (bacteriocins). In fact, the modification of anionic phosphatidylglycerol with positively charged L-lysine results in repulsion of the peptides. The chain is Lysylphosphatidylglycerol biosynthesis bifunctional protein LysX (lysX) from Rhodococcus opacus (strain B4).